Reading from the N-terminus, the 370-residue chain is Aminomethyltransferase (370 aa).

Belongs to the GcvT family. As to quaternary structure, the glycine cleavage system is composed of four proteins: P, T, L and H.

It catalyses the reaction N(6)-[(R)-S(8)-aminomethyldihydrolipoyl]-L-lysyl-[protein] + (6S)-5,6,7,8-tetrahydrofolate = N(6)-[(R)-dihydrolipoyl]-L-lysyl-[protein] + (6R)-5,10-methylene-5,6,7,8-tetrahydrofolate + NH4(+). In terms of biological role, the glycine cleavage system catalyzes the degradation of glycine. The protein is Aminomethyltransferase of Clostridium botulinum (strain Loch Maree / Type A3).